We begin with the raw amino-acid sequence, 298 residues long: DDRGK domain-containing protein 1 (298 aa).

A helical transmembrane segment spans residues 1 to 21 (MDIVLYFVAVPILIVLIVSAV). Topologically, residues 22 to 298 (KVRGKTEEDN…NLIPEIHNTA (277 aa)) are cytoplasmic. The tract at residues 71 to 149 (NSAYREAADN…EERRKEDKKE (79 aa)) is disordered. Over residues 82–94 (SPVEVEEEYEEAE) the composition is skewed to acidic residues. Residues 110–149 (KLEEKQAKRAQREAELEEREERKRTQELREEERRKEDKKE) show a composition bias toward basic and acidic residues. A UFM1-interacting motif (UFIM) motif is present at residues 181–195 (SFVVEEQGEADELTE). Residues 215–259 (VLLEDLASHFGLRTQDAISRLQDLLSDGSITGVIDDRGKFIFITP) enclose the PCI domain.

Belongs to the DDRGK1 family. In terms of assembly, component of the UFM1 ribosome E3 ligase (UREL) complex, composed of ufl1, ddrgk1 and cdk5rap3.

The protein localises to the endoplasmic reticulum membrane. Functionally, component of the UFM1 ribosome E3 ligase (UREL) complex, a multiprotein complex that catalyzes ufmylation of endoplasmic reticulum-docked proteins. The UREL complex plays a key role in ribosome recycling by mediating mono-ufmylation of the RPL26/uL24 subunit of the 60S ribosome following ribosome dissociation: ufmylation weakens the junction between post-termination 60S subunits and SEC61 translocons, promoting release and recycling of the large ribosomal subunit from the endoplasmic reticulum membrane. Ufmylation of RPL26/uL24 and subsequent 60S ribosome recycling either take place after normal termination of translation or after ribosome stalling during cotranslational translocation at the endoplasmic reticulum. Within the UREL complex, DDRGK1 tethers the complex to the endoplasmic reticulum membrane to restrict its activity to endoplasmic reticulum-docked ribosomes and acts as an ufmylation 'reader': following RPL26/uL24 ufmylation, DDRGK1 specifically binds to ufmylated RPL26/uL24 via its UFIM motif, resulting in stable association between the 60S ribosome and the UREL complex, followed by dissociation of the 60S ribosome subunit from the endoplasmic reticulum membrane. The UREL complex is also involved in reticulophagy in response to endoplasmic reticulum stress by promoting ufmylation of proteins such as CYB5R3 and RPN1, thereby promoting lysosomal degradation of ufmylated proteins. Required for stabilization and ufmylation of ATG9A. The polypeptide is DDRGK domain-containing protein 1 (Osmerus mordax (Rainbow smelt)).